The following is a 197-amino-acid chain: Large ribosomal subunit protein uL10 (197 aa).

A disordered region spans residues 162–197 (READGETAETPAQETASDDSKSTKAEASDASTTENK). A compositionally biased stretch (basic and acidic residues) spans 179–188 (DDSKSTKAEA).

The protein belongs to the universal ribosomal protein uL10 family. In terms of assembly, part of the ribosomal stalk of the 50S ribosomal subunit. The N-terminus interacts with L11 and the large rRNA to form the base of the stalk. The C-terminus forms an elongated spine to which L12 dimers bind in a sequential fashion forming a multimeric L10(L12)X complex.

Forms part of the ribosomal stalk, playing a central role in the interaction of the ribosome with GTP-bound translation factors. The chain is Large ribosomal subunit protein uL10 from Oenococcus oeni (strain ATCC BAA-331 / PSU-1).